Consider the following 189-residue polypeptide: Movement protein (189 aa).

This sequence belongs to the tombusvirus/aureusvirus movement protein p22 family. As to quaternary structure, interacts with host protein HFI22. Post-translationally, phosphorylated.

It localises to the host membrane. In terms of biological role, transports viral genome to neighboring plant cells directly through plasmosdesmata, without any budding. The movement protein allows efficient cell to cell propagation, by bypassing the host cell wall barrier. In Capsicum annuum (Capsicum pepper), this protein is Movement protein.